The chain runs to 185 residues: CASP-like protein 2C3 (185 aa).

The Cytoplasmic segment spans residues 1-13 (MAAAARVSEVKAE). Residues 14–34 (GLLRGACAALAAAAALLVGLS) traverse the membrane as a helical segment. The Extracellular portion of the chain corresponds to 35 to 53 (TQTETVLLVRKKATVKDVQ). A helical membrane pass occupies residues 54–74 (ALWVLAMAAAAAAGYHLLQLL). Topologically, residues 75-104 (KCLYLGRVGGARPCRRSSRALAWTCLLLDK) are cytoplasmic. A helical transmembrane segment spans residues 105–125 (ACAYTTFATTVAAAQACVVAL). Topologically, residues 126–146 (DGAHAVQWTKLCNIYTRFCEQ) are extracellular. A helical transmembrane segment spans residues 147–167 (VAGSLVLGMLAAVGTAVLSAA). The Cytoplasmic segment spans residues 168–185 (SARNVFRHYSSLETYAAH).

It belongs to the Casparian strip membrane proteins (CASP) family. As to quaternary structure, homodimer and heterodimers.

The protein localises to the cell membrane. This is CASP-like protein 2C3 from Zea mays (Maize).